The primary structure comprises 135 residues: Probable histone H2A.1 (135 aa).

This sequence belongs to the histone H2A family. As to quaternary structure, the nucleosome is a histone octamer containing two molecules each of H2A, H2B, H3 and H4 assembled in one H3-H4 heterotetramer and two H2A-H2B heterodimers. The octamer wraps approximately 147 bp of DNA.

It is found in the nucleus. The protein resides in the chromosome. Core component of nucleosome. Nucleosomes wrap and compact DNA into chromatin, limiting DNA accessibility to the cellular machineries which require DNA as a template. Histones thereby play a central role in transcription regulation, DNA repair, DNA replication and chromosomal stability. DNA accessibility is regulated via a complex set of post-translational modifications of histones, also called histone code, and nucleosome remodeling. The sequence is that of Probable histone H2A.1 from Oryza sativa subsp. japonica (Rice).